Reading from the N-terminus, the 186-residue chain is ATP synthase subunit delta (186 aa).

This sequence belongs to the ATPase delta chain family. In terms of assembly, F-type ATPases have 2 components, F(1) - the catalytic core - and F(0) - the membrane proton channel. F(1) has five subunits: alpha(3), beta(3), gamma(1), delta(1), epsilon(1). F(0) has three main subunits: a(1), b(2) and c(10-14). The alpha and beta chains form an alternating ring which encloses part of the gamma chain. F(1) is attached to F(0) by a central stalk formed by the gamma and epsilon chains, while a peripheral stalk is formed by the delta and b chains.

It localises to the cell inner membrane. Its function is as follows. F(1)F(0) ATP synthase produces ATP from ADP in the presence of a proton or sodium gradient. F-type ATPases consist of two structural domains, F(1) containing the extramembraneous catalytic core and F(0) containing the membrane proton channel, linked together by a central stalk and a peripheral stalk. During catalysis, ATP synthesis in the catalytic domain of F(1) is coupled via a rotary mechanism of the central stalk subunits to proton translocation. This protein is part of the stalk that links CF(0) to CF(1). It either transmits conformational changes from CF(0) to CF(1) or is implicated in proton conduction. The chain is ATP synthase subunit delta from Chelativorans sp. (strain BNC1).